The sequence spans 338 residues: Microtubule-associated protein RP/EB family member 2 (338 aa).

The segment at 1 to 21 (MPGPTQALSPNGENNNDIIQD) is disordered. Positions 57 to 159 (TMSRHDIIAW…FIQWFKKFFD (103 aa)) constitute a Calponin-homology (CH) domain. Disordered regions lie at residues 171–241 (EARQ…KDLE) and 300–338 (SEEHESHTEEHEGEEQVHEQPSSRRSTDSRSVSDNFHFV). Positions 200–234 (SPTAGAAKSSPASKPGSTPSRPSSAKKAAPSSSAS) are enriched in low complexity. Positions 236–306 (SDKDLETQVI…LYASEEHESH (71 aa)) constitute an EB1 C-terminal domain. A compositionally biased stretch (basic and acidic residues) spans 300–327 (SEEHESHTEEHEGEEQVHEQPSSRRSTD). A compositionally biased stretch (low complexity) spans 328–338 (SRSVSDNFHFV).

This sequence belongs to the MAPRE family.

The protein resides in the cytoplasm. It localises to the cytoskeleton. Functionally, may be involved in microtubule polymerization, and spindle function by stabilizing microtubules and anchoring them at centrosomes. The chain is Microtubule-associated protein RP/EB family member 2 (MAPRE2) from Gallus gallus (Chicken).